Here is a 205-residue protein sequence, read N- to C-terminus: Imidazole glycerol phosphate synthase subunit HisH (205 aa).

The 203-residue stretch at 3-205 (KIGLIDYGMG…LLRRWIKSIQ (203 aa)) folds into the Glutamine amidotransferase type-1 domain. Cysteine 81 acts as the Nucleophile in catalysis. Residues histidine 185 and glutamate 187 contribute to the active site.

In terms of assembly, heterodimer of HisH and HisF.

The protein resides in the cytoplasm. The catalysed reaction is 5-[(5-phospho-1-deoxy-D-ribulos-1-ylimino)methylamino]-1-(5-phospho-beta-D-ribosyl)imidazole-4-carboxamide + L-glutamine = D-erythro-1-(imidazol-4-yl)glycerol 3-phosphate + 5-amino-1-(5-phospho-beta-D-ribosyl)imidazole-4-carboxamide + L-glutamate + H(+). The enzyme catalyses L-glutamine + H2O = L-glutamate + NH4(+). It functions in the pathway amino-acid biosynthesis; L-histidine biosynthesis; L-histidine from 5-phospho-alpha-D-ribose 1-diphosphate: step 5/9. Its function is as follows. IGPS catalyzes the conversion of PRFAR and glutamine to IGP, AICAR and glutamate. The HisH subunit catalyzes the hydrolysis of glutamine to glutamate and ammonia as part of the synthesis of IGP and AICAR. The resulting ammonia molecule is channeled to the active site of HisF. The chain is Imidazole glycerol phosphate synthase subunit HisH from Prochlorococcus marinus subsp. pastoris (strain CCMP1986 / NIES-2087 / MED4).